The sequence spans 423 residues: Serine--tRNA ligase (423 aa).

229–231 (TAE) provides a ligand contact to L-serine. 260–262 (RRE) is a binding site for ATP. Glu-283 serves as a coordination point for L-serine. 347-350 (EISS) is an ATP binding site. Ser-383 contributes to the L-serine binding site.

The protein belongs to the class-II aminoacyl-tRNA synthetase family. Type-1 seryl-tRNA synthetase subfamily. As to quaternary structure, homodimer. The tRNA molecule binds across the dimer.

The protein resides in the cytoplasm. The enzyme catalyses tRNA(Ser) + L-serine + ATP = L-seryl-tRNA(Ser) + AMP + diphosphate + H(+). It catalyses the reaction tRNA(Sec) + L-serine + ATP = L-seryl-tRNA(Sec) + AMP + diphosphate + H(+). It functions in the pathway aminoacyl-tRNA biosynthesis; selenocysteinyl-tRNA(Sec) biosynthesis; L-seryl-tRNA(Sec) from L-serine and tRNA(Sec): step 1/1. Catalyzes the attachment of serine to tRNA(Ser). Is also able to aminoacylate tRNA(Sec) with serine, to form the misacylated tRNA L-seryl-tRNA(Sec), which will be further converted into selenocysteinyl-tRNA(Sec). The protein is Serine--tRNA ligase of Trichlorobacter lovleyi (strain ATCC BAA-1151 / DSM 17278 / SZ) (Geobacter lovleyi).